The sequence spans 160 residues: MSKEVIVESFELDHTIVKAPYVRLIGEETGPKGDIISNYDIRLVQPNEDSIPTAGLHTIEHLLAKLIRTRIDGMIDCSPFGCRTGFHMIMWGRHTSAKIAAVIKDSLKEIAETTTWEDVPGTTIESCGNYKDHSLFSAKEWARLILEQGISDDAFERHVI.

Fe cation-binding residues include His-57, His-61, and Cys-127.

The protein belongs to the LuxS family. As to quaternary structure, homodimer. It depends on Fe cation as a cofactor.

The catalysed reaction is S-(5-deoxy-D-ribos-5-yl)-L-homocysteine = (S)-4,5-dihydroxypentane-2,3-dione + L-homocysteine. Its function is as follows. Involved in the synthesis of autoinducer 2 (AI-2) which is secreted by bacteria and is used to communicate both the cell density and the metabolic potential of the environment. The regulation of gene expression in response to changes in cell density is called quorum sensing. Catalyzes the transformation of S-ribosylhomocysteine (RHC) to homocysteine (HC) and 4,5-dihydroxy-2,3-pentadione (DPD). This is S-ribosylhomocysteine lyase from Streptococcus pneumoniae (strain CGSP14).